Reading from the N-terminus, the 220-residue chain is Metalloproteinase inhibitor 2 (220 aa).

Positions 1-26 are cleaved as a signal peptide; sequence MGATARSLRLALGLLLLGTLPRGADA. Cysteine 27 contributes to the Zn(2+) binding site. 2 involved in metalloproteinase-binding regions span residues 27–30 and 95–96; these read CSCS and SA. Disulfide bonds link cysteine 27/cysteine 98, cysteine 29/cysteine 127, cysteine 39/cysteine 152, cysteine 154/cysteine 201, cysteine 159/cysteine 164, and cysteine 172/cysteine 193. The NTR domain maps to 27-152; sequence CSCSPVHPQQ…SLNHRYQMGC (126 aa).

The protein belongs to the protease inhibitor I35 (TIMP) family. In terms of assembly, interacts (via the C-terminal) with MMP2 (via the C-terminal PEX domain); the interaction inhibits the MMP2 activity. Post-translationally, the activity of TIMP2 is dependent on the presence of disulfide bonds. Predominantly expressed in the lung in alveolar macrophages and epithelial cells. Also found in brain, kidney, intestine, spleen and heart.

It localises to the secreted. Its function is as follows. Complexes with metalloproteinases (such as collagenases) and irreversibly inactivates them by binding to their catalytic zinc cofactor. The chain is Metalloproteinase inhibitor 2 (TIMP2) from Cavia porcellus (Guinea pig).